A 484-amino-acid polypeptide reads, in one-letter code: Probable glycine dehydrogenase (decarboxylating) subunit 2 (484 aa).

Lys-264 carries the post-translational modification N6-(pyridoxal phosphate)lysine.

This sequence belongs to the GcvP family. C-terminal subunit subfamily. The glycine cleavage system is composed of four proteins: P, T, L and H. In this organism, the P 'protein' is a heterodimer of two subunits. Pyridoxal 5'-phosphate is required as a cofactor.

It carries out the reaction N(6)-[(R)-lipoyl]-L-lysyl-[glycine-cleavage complex H protein] + glycine + H(+) = N(6)-[(R)-S(8)-aminomethyldihydrolipoyl]-L-lysyl-[glycine-cleavage complex H protein] + CO2. The glycine cleavage system catalyzes the degradation of glycine. The P protein binds the alpha-amino group of glycine through its pyridoxal phosphate cofactor; CO(2) is released and the remaining methylamine moiety is then transferred to the lipoamide cofactor of the H protein. The polypeptide is Probable glycine dehydrogenase (decarboxylating) subunit 2 (Legionella pneumophila (strain Paris)).